The chain runs to 222 residues: UPF0758 protein YicR (222 aa).

Positions 100 to 222 (PLLSPEMTRE…YVSFAERGWI (123 aa)) constitute an MPN domain. 3 residues coordinate Zn(2+): H171, H173, and D184. Positions 171-184 (HNHPSGCAEPSKAD) match the JAMM motif motif.

Belongs to the UPF0758 family. YicR subfamily.

The polypeptide is UPF0758 protein YicR (Shigella dysenteriae serotype 1 (strain Sd197)).